A 396-amino-acid polypeptide reads, in one-letter code: Formate-dependent phosphoribosylglycinamide formyltransferase (396 aa).

N(1)-(5-phospho-beta-D-ribosyl)glycinamide is bound by residues 24–25 and glutamate 84; that span reads EL. Residues arginine 116, lysine 157, 162 to 167, 197 to 200, and glutamate 205 each bind ATP; these read SSGKGQ and EGFV. Residues 121-310 enclose the ATP-grasp domain; that stretch reads RLAAETLGIK…EFALHVRAIL (190 aa). Mg(2+) contacts are provided by glutamate 269 and glutamate 281. Residues aspartate 288, lysine 359, and 366 to 367 each bind N(1)-(5-phospho-beta-D-ribosyl)glycinamide; that span reads RR.

Belongs to the PurK/PurT family. Homodimer.

It catalyses the reaction N(1)-(5-phospho-beta-D-ribosyl)glycinamide + formate + ATP = N(2)-formyl-N(1)-(5-phospho-beta-D-ribosyl)glycinamide + ADP + phosphate + H(+). The protein operates within purine metabolism; IMP biosynthesis via de novo pathway; N(2)-formyl-N(1)-(5-phospho-D-ribosyl)glycinamide from N(1)-(5-phospho-D-ribosyl)glycinamide (formate route): step 1/1. Involved in the de novo purine biosynthesis. Catalyzes the transfer of formate to 5-phospho-ribosyl-glycinamide (GAR), producing 5-phospho-ribosyl-N-formylglycinamide (FGAR). Formate is provided by PurU via hydrolysis of 10-formyl-tetrahydrofolate. The polypeptide is Formate-dependent phosphoribosylglycinamide formyltransferase (Psychromonas ingrahamii (strain DSM 17664 / CCUG 51855 / 37)).